We begin with the raw amino-acid sequence, 227 residues long: Urease accessory protein UreF (227 aa).

The protein belongs to the UreF family. As to quaternary structure, ureD, UreF and UreG form a complex that acts as a GTP-hydrolysis-dependent molecular chaperone, activating the urease apoprotein by helping to assemble the nickel containing metallocenter of UreC. The UreE protein probably delivers the nickel.

The protein localises to the cytoplasm. In terms of biological role, required for maturation of urease via the functional incorporation of the urease nickel metallocenter. This chain is Urease accessory protein UreF, found in Actinobacillus pleuropneumoniae serotype 5b (strain L20).